The sequence spans 248 residues: Large ribosomal subunit protein uL4 (248 aa).

Disordered stretches follow at residues R72–N103 and G173–S210. A compositionally biased stretch (basic and acidic residues) spans P92–N103. Basic residues predominate over residues R177–S189.

It belongs to the universal ribosomal protein uL4 family. In terms of assembly, part of the 50S ribosomal subunit.

In terms of biological role, one of the primary rRNA binding proteins, this protein initially binds near the 5'-end of the 23S rRNA. It is important during the early stages of 50S assembly. It makes multiple contacts with different domains of the 23S rRNA in the assembled 50S subunit and ribosome. Its function is as follows. Forms part of the polypeptide exit tunnel. The sequence is that of Large ribosomal subunit protein uL4 from Halorubrum lacusprofundi (strain ATCC 49239 / DSM 5036 / JCM 8891 / ACAM 34).